The following is a 447-amino-acid chain: Tubulin beta-1 chain (447 aa).

Positions 11, 69, 138, 142, 143, 144, 204, and 226 each coordinate GTP. Mg(2+) is bound at residue E69. Residues 424-447 (QYQDATAEEEGEGDEEEAEGEAAA) are disordered. Acidic residues predominate over residues 429–447 (TAEEEGEGDEEEAEGEAAA).

It belongs to the tubulin family. In terms of assembly, dimer of alpha and beta chains. A typical microtubule is a hollow water-filled tube with an outer diameter of 25 nm and an inner diameter of 15 nM. Alpha-beta heterodimers associate head-to-tail to form protofilaments running lengthwise along the microtubule wall with the beta-tubulin subunit facing the microtubule plus end conferring a structural polarity. Microtubules usually have 13 protofilaments but different protofilament numbers can be found in some organisms and specialized cells. The cofactor is Mg(2+).

It is found in the cytoplasm. The protein resides in the cytoskeleton. Functionally, tubulin is the major constituent of microtubules, a cylinder consisting of laterally associated linear protofilaments composed of alpha- and beta-tubulin heterodimers. Microtubules grow by the addition of GTP-tubulin dimers to the microtubule end, where a stabilizing cap forms. Below the cap, tubulin dimers are in GDP-bound state, owing to GTPase activity of alpha-tubulin. This is Tubulin beta-1 chain (TUBB1) from Cyanophora paradoxa.